Here is a 216-residue protein sequence, read N- to C-terminus: Elongation factor Ts (216 aa).

The segment at 81–84 is involved in Mg(2+) ion dislocation from EF-Tu; the sequence is TDFV.

The protein belongs to the EF-Ts family.

Its subcellular location is the cytoplasm. Its function is as follows. Associates with the EF-Tu.GDP complex and induces the exchange of GDP to GTP. It remains bound to the aminoacyl-tRNA.EF-Tu.GTP complex up to the GTP hydrolysis stage on the ribosome. The protein is Elongation factor Ts of Geobacter metallireducens (strain ATCC 53774 / DSM 7210 / GS-15).